The primary structure comprises 112 residues: Large ribosomal subunit protein uL22 (112 aa).

It belongs to the universal ribosomal protein uL22 family. As to quaternary structure, part of the 50S ribosomal subunit.

This protein binds specifically to 23S rRNA; its binding is stimulated by other ribosomal proteins, e.g. L4, L17, and L20. It is important during the early stages of 50S assembly. It makes multiple contacts with different domains of the 23S rRNA in the assembled 50S subunit and ribosome. Its function is as follows. The globular domain of the protein is located near the polypeptide exit tunnel on the outside of the subunit, while an extended beta-hairpin is found that lines the wall of the exit tunnel in the center of the 70S ribosome. In Caldanaerobacter subterraneus subsp. tengcongensis (strain DSM 15242 / JCM 11007 / NBRC 100824 / MB4) (Thermoanaerobacter tengcongensis), this protein is Large ribosomal subunit protein uL22.